Here is a 522-residue protein sequence, read N- to C-terminus: Zinc finger protein 329 (522 aa).

Serine 30 is subject to Phosphoserine. 12 C2H2-type zinc fingers span residues 184 to 206 (YKCAECGKCFKRNSSLVLHHRTH), 212 to 234 (YTCNDCGKSFSKNYNLIVHRRIH), 240 to 262 (YKCSKCGKAFSDGSALTQHQRIH), 268 to 290 (YACLDCGKTFNRNSSLILHQRTH), 296 to 318 (YRCNECGKPFTDISHLTVHLRIH), 324 to 346 (YECSRCGKAFRDGSYLTQHERTH), 352 to 374 (FECVECGKSFSRNSHLIVHQKIH), 380 to 402 (YECKECGKTFIESAYLIRHQRVH), 408 to 430 (YGCNQCRKLFRNIAGLIRHQRIH), 436 to 458 (YECNQCGKAFRDSSCLTKHQRIH), 464 to 486 (YQCLKCGKSFRQNTHLVVHQRLH), and 492 to 514 (SQCPHCGKIFRRSWCLARHQRTH).

Belongs to the krueppel C2H2-type zinc-finger protein family.

It is found in the nucleus. Its function is as follows. May be involved in transcriptional regulation. This is Zinc finger protein 329 (Znf329) from Mus musculus (Mouse).